A 433-amino-acid chain; its full sequence is MSAKKLFIQTLGCAMNVRDSEHMIAELTQKENYALTEDIKEADLILINTCSVREKPVHKLFSEVGGFEKVKKEGAKIGVCGCTASHLGNEIFKRAPYVDFVLGARNISKITQAIKTPKFMGVDIDYDESEFAFADFRNSIYKSYINISIGCDKHCTYCIVPHTRGDEISIPFNIIYKEAQKAVEKGAKEIFLLGQNVNNYGKRFRNEHKKMDFSDLLEELSTIEDLERIRFTSPHPLHMDDKFLEVFANNPKVCKSMHMPLQSGSSEILKAMKRGYTKEWYLNRALKLRELCPNVSISTDIIVAFPGESEKDFEETMDVLEKVRFEQIFSFKYSKRPLTKAATMPNQIDEETASRRLSTLQNRHSEILDEIVKKQENKTFKVLFEELRAGNSIAGRTDNNFLVQVEGSEELLGQFKEVKITNAKRMVLYGEIV.

Residues 4–119 (KKLFIQTLGC…ITQAIKTPKF (116 aa)) form the MTTase N-terminal domain. [4Fe-4S] cluster-binding residues include Cys-13, Cys-50, Cys-82, Cys-151, Cys-155, and Cys-158. A Radical SAM core domain is found at 137–370 (RNSIYKSYIN…QNRHSEILDE (234 aa)). The TRAM domain maps to 373–433 (KKQENKTFKV…KRMVLYGEIV (61 aa)).

The protein belongs to the methylthiotransferase family. MiaB subfamily. As to quaternary structure, monomer. It depends on [4Fe-4S] cluster as a cofactor.

The protein resides in the cytoplasm. The catalysed reaction is N(6)-dimethylallyladenosine(37) in tRNA + (sulfur carrier)-SH + AH2 + 2 S-adenosyl-L-methionine = 2-methylsulfanyl-N(6)-dimethylallyladenosine(37) in tRNA + (sulfur carrier)-H + 5'-deoxyadenosine + L-methionine + A + S-adenosyl-L-homocysteine + 2 H(+). Catalyzes the methylthiolation of N6-(dimethylallyl)adenosine (i(6)A), leading to the formation of 2-methylthio-N6-(dimethylallyl)adenosine (ms(2)i(6)A) at position 37 in tRNAs that read codons beginning with uridine. This chain is tRNA-2-methylthio-N(6)-dimethylallyladenosine synthase, found in Campylobacter jejuni (strain RM1221).